A 101-amino-acid chain; its full sequence is Urease subunit beta (101 aa).

This sequence belongs to the urease beta subunit family. As to quaternary structure, heterotrimer of UreA (gamma), UreB (beta) and UreC (alpha) subunits. Three heterotrimers associate to form the active enzyme.

The protein resides in the cytoplasm. The enzyme catalyses urea + 2 H2O + H(+) = hydrogencarbonate + 2 NH4(+). It functions in the pathway nitrogen metabolism; urea degradation; CO(2) and NH(3) from urea (urease route): step 1/1. The chain is Urease subunit beta from Roseobacter denitrificans (strain ATCC 33942 / OCh 114) (Erythrobacter sp. (strain OCh 114)).